The chain runs to 365 residues: Protein BIIDXI (365 aa).

The N-terminal stretch at 1–21 is a signal peptide; it reads MKEMGVIVLLLLHSFFYVAFC. Asparagine 48, asparagine 121, and asparagine 208 each carry an N-linked (GlcNAc...) asparagine glycan.

Interacts with PME3. Mainly expressed in vascular tissues of roots, leaves, stamens and petals.

Its subcellular location is the secreted. It is found in the cell wall. Its function is as follows. Together with At5g11420, acts as a positive regulator of PME3 activity during several developmental processes, including reproductive organ development, hypocotyls elongation, seed germination and endosperm (testa) rupture at the micropyle, probably by modulating the pectin methylation status in cell walls. Involved in the regulation of pectin methylation degree to modulate cell wall physiology during cell separation, hypocotyl growth and embryo development. Required during embryo development, especially to regulate homogalacturonans (HG) methyl esterification in endosperm cell walls, a process related to embryo bending. Also implicated in hypocotyl growth and gravitropic response via the regulation of auxin efflux. Also regulates cell wall pectin upon root-knot nematode Meloidogyne incognita infection. In Arabidopsis thaliana (Mouse-ear cress), this protein is Protein BIIDXI.